Reading from the N-terminus, the 120-residue chain is Large ribosomal subunit protein bL20 (120 aa).

Belongs to the bacterial ribosomal protein bL20 family.

In terms of biological role, binds directly to 23S ribosomal RNA and is necessary for the in vitro assembly process of the 50S ribosomal subunit. It is not involved in the protein synthesizing functions of that subunit. The sequence is that of Large ribosomal subunit protein bL20 from Ligilactobacillus salivarius (strain UCC118) (Lactobacillus salivarius).